The sequence spans 331 residues: UBX domain-containing protein 2B (331 aa).

Disordered regions lie at residues M1–D26 and E38–R63. An N-acetylalanine modification is found at A2. The span at E38 to R48 shows a compositional bias: basic and acidic residues. Residue S56 is modified to Phosphoserine. T59 carries the post-translational modification Phosphothreonine. S66 bears the Phosphoserine mark. The SEP domain occupies D141–I206. S231, S234, and S235 each carry phosphoserine. The UBX domain occupies D252–Q329.

This sequence belongs to the NSFL1C family. Interacts with VCP. Does not bind ubiquitin. In terms of tissue distribution, present at high level in brain. Also present in liver, kidney, spleen, testis, lung and heart (at protein level).

It is found in the nucleus. The protein localises to the cytoplasm. The protein resides in the cytosol. Its subcellular location is the endoplasmic reticulum. It localises to the golgi apparatus. It is found in the cytoskeleton. The protein localises to the microtubule organizing center. The protein resides in the centrosome. In terms of biological role, adapter protein required for Golgi and endoplasmic reticulum biogenesis. Involved in Golgi and endoplasmic reticulum maintenance during interphase and in their reassembly at the end of mitosis. The complex formed with VCP has membrane fusion activity; membrane fusion activity requires USO1-GOLGA2 tethering and BET1L. VCPIP1 is also required, but not its deubiquitinating activity. Together with NSFL1C/p47, regulates the centrosomal levels of kinase AURKA/Aurora A during mitotic progression by promoting AURKA removal from centrosomes in prophase. Also, regulates spindle orientation during mitosis. This Rattus norvegicus (Rat) protein is UBX domain-containing protein 2B (Ubxn2b).